The chain runs to 265 residues: U6 snRNA phosphodiesterase 1 (265 aa).

Positions 1–72 (MSAAPLVGYS…DSTKHGGRVR (72 aa)) are disordered. Over residues 20–31 (DGMRTRPGDGSH) the composition is skewed to basic and acidic residues. The active-site Proton acceptor is the histidine 120. Residue 120–122 (HLS) coordinates AMP. UMP contacts are provided by residues glutamine 164, tyrosine 202, and 206–210 (SFHLS). AMP contacts are provided by residues tyrosine 202 and 204 to 210 (DPSFHLS). Histidine 208 serves as the catalytic Proton donor.

The protein belongs to the 2H phosphoesterase superfamily. USB1 family. In terms of assembly, interacts with PLRG1, CDC5L and PRPF19.

Its subcellular location is the nucleus. It catalyses the reaction a 3'-end uridylyl-uridine-RNA = a 3'-end 2',3'-cyclophospho-uridine-RNA + uridine. The catalysed reaction is a 3'-end uridylyl-adenosine-RNA = a 3'-end 2',3'-cyclophospho-uridine-RNA + adenosine. 3'-5' RNA exonuclease activity is inhibited by a 3' phosphate terminated RNA. Its function is as follows. 3'-5' RNA exonuclease that trims the 3' end of oligo(U) and oligo(A) tracts of the pre-U6 small nuclear RNA (snRNA) molecule, leading to the formation of a mature U6 snRNA 3' end-terminated with a 2',3'-cyclic phosphate. Participates in the U6 snRNA 3' end processing that prevents U6 snRNA degradation. In addition also removes uridines from the 3' end of U6atac snRNA and possibly the vault RNA VTRNA1-1. This is U6 snRNA phosphodiesterase 1 from Homo sapiens (Human).